The chain runs to 792 residues: Coiled-coil domain-containing protein R3HCC1L (792 aa).

Positions 7–27 are EJC-binding motif; may mediate interaction with the EJC; it reads RCRVRARRPDMALYVPKARRG. 2 disordered regions span residues 32–61 and 527–567; these read KTGD…QKEV and EFKT…TSHT. Residue Ser688 is modified to Phosphoserine. Thr712 carries the post-translational modification Phosphothreonine. The stretch at 751–783 forms a coiled coil; sequence RSKQSKTEREAELKKLQEARERKRLEAKQREDI. The interval 772 to 792 is disordered; the sequence is RKRLEAKQREDIWEGRDQSTV.

As to quaternary structure, may interact with the exon junction complex (EJC) composed at least of CASC3, EIF4A3, MAGOH and RBM8A. In terms of tissue distribution, expressed in placenta.

In Homo sapiens (Human), this protein is Coiled-coil domain-containing protein R3HCC1L (R3HCC1L).